Consider the following 91-residue polypeptide: Cell division protein FtsB (91 aa).

Topologically, residues 1–3 are cytoplasmic; the sequence is MRW. The chain crosses the membrane as a helical span at residues 4 to 21; that stretch reads PLIVLAVLVIVLQYPLWL. The Periplasmic portion of the chain corresponds to 22–91; that stretch reads GKGGWLRVWD…EIFVHTPRKP (70 aa). Residues 28–74 adopt a coiled-coil conformation; the sequence is RVWDVDRQLQAQRETNQRLEQRNAGLEAEVRDLKSGNEAVEERARFE.

This sequence belongs to the FtsB family. In terms of assembly, part of a complex composed of FtsB, FtsL and FtsQ.

It localises to the cell inner membrane. Its function is as follows. Essential cell division protein. May link together the upstream cell division proteins, which are predominantly cytoplasmic, with the downstream cell division proteins, which are predominantly periplasmic. The sequence is that of Cell division protein FtsB from Aromatoleum aromaticum (strain DSM 19018 / LMG 30748 / EbN1) (Azoarcus sp. (strain EbN1)).